The following is an 85-amino-acid chain: Toxin BmKaTX15 (85 aa).

A signal peptide spans 1-19; it reads MNYLVFFSLALLVMTGVES. An LCN-type CS-alpha/beta domain is found at 21–83; the sequence is RDGYIADDKN…VPIRVPGKCN (63 aa). 4 disulfides stabilise this stretch: Cys31-Cys82, Cys35-Cys55, Cys41-Cys65, and Cys45-Cys67.

Belongs to the long (4 C-C) scorpion toxin superfamily. Sodium channel inhibitor family. Alpha subfamily. As to expression, expressed by the venom gland.

It is found in the secreted. Functionally, alpha toxins bind voltage-independently at site-3 of sodium channels (Nav) and inhibit the inactivation of the activated channels, thereby blocking neuronal transmission. The chain is Toxin BmKaTX15 from Olivierus martensii (Manchurian scorpion).